We begin with the raw amino-acid sequence, 747 residues long: Anoctamin-9 (747 aa).

The Cytoplasmic segment spans residues 1-193 (MQDDESSQIF…LYFTWLGWYT (193 aa)). A helical membrane pass occupies residues 194–214 (YMLVPAAVVGLIVFLSGFALF). The Extracellular segment spans residues 215 to 259 (DSSQISKEICSANDIFMCPLGDHSHRYLRLSEMCTFAKLTHLFDN). The residue at position 245 (Ser-245) is a Phosphoserine; by PKA. A helical membrane pass occupies residues 260–280 (EGTVLFAIFMALWATVFLEIW). Residues 281 to 326 (KRKRAHEVQSWKLYEWDEEEEEMALELINSPHYKLKDHRHSYLSST) lie on the Cytoplasmic side of the membrane. The chain crosses the membrane as a helical span at residues 327 to 347 (IILILSLFMICLMIGMAHVLV). The Extracellular segment spans residues 348–364 (VYRVLAGALFSSLVKQQ). Residues 365-385 (VTTAVVVTGAVVHYIIIVIMT) traverse the membrane as a helical segment. Topologically, residues 386–414 (KVNKYVALKLCKFEESGTFSEQERKFTVK) are cytoplasmic. The chain crosses the membrane as a helical span at residues 415-435 (FFILQFFAHFSSLIYIAFILG). The Extracellular portion of the chain corresponds to 436 to 543 (RINGHPGKST…EMMIQYGFTT (108 aa)). A helical membrane pass occupies residues 544–564 (IFVAAFPLAPLLALFSNLVEI). The Cytoplasmic portion of the chain corresponds to 565-595 (RLDAIKMVRLQRRLVPRKAKDIGTWLQVLET). Residues 596–616 (IGVLAVIANGMVIAFTSEFIP) traverse the membrane as a helical segment. Topologically, residues 617–695 (RVVYKYHYGP…FWFILAIRLT (79 aa)) are extracellular. N-linked (GlcNAc...) asparagine glycosylation is found at Asn-630, Asn-643, Asn-665, and Asn-681. Residues 696 to 716 (FVILFEHFALCIKLIAAWFVP) traverse the membrane as a helical segment. At 717–747 (DVPQKVKNEVLQEKYDRIRHRMRFSSRSTDV) the chain is on the cytoplasmic side.

Belongs to the anoctamin family. In terms of processing, phosphorylation on Ser-245 by cAMP-dependent protein kinase A (PKA)is essential for activation of its cation channel activity. Highly expressed in the olfactory epithelium, particularly in mature olfactory sensory neurons (at protein level). Expressed in the kidney (at protein level). Predominant expression seen in epithelial tissues. Highly expressed in the small intestine, colon and stomach.

The protein localises to the cell membrane. The protein resides in the endoplasmic reticulum. The enzyme catalyses a 1,2-diacyl-sn-glycero-3-phospho-L-serine(in) = a 1,2-diacyl-sn-glycero-3-phospho-L-serine(out). The catalysed reaction is a beta-D-galactosyl-(1&lt;-&gt;1')-N-acylsphing-4-enine(out) = a beta-D-galactosyl-(1&lt;-&gt;1')-N-acylsphing-4-enine(in). It carries out the reaction a 1,2-diacyl-sn-glycero-3-phosphocholine(in) = a 1,2-diacyl-sn-glycero-3-phosphocholine(out). It catalyses the reaction Ca(2+)(in) = Ca(2+)(out). The enzyme catalyses Na(+)(in) = Na(+)(out). The catalysed reaction is K(+)(in) = K(+)(out). Its activity is regulated as follows. Cation channel activity is activated via phosphorylation on Ser-245 by cAMP-dependent protein kinase A (PKA). Inhibited by NaCl. PKA-activated nonselective cation channel. Discriminates poorly among cations but is more permeable to Ca(2+) ions than to monovalent cations. Acts as a calcium-activated calcium permeable channel which may operate as a endoplasmic reticulum (ER) Ca(2+)-leak channel, reducing the loading of the ER Ca(2+) store. Regulates intracellular Ca2+ signals, ion channel activity, and cytokine release in the renal tissue. Plays an important role in olfaction, amplifying cAMP-evoked cyclic nucleotide-gated (CNG) channel currents in the olfactory sensory neurons. Has calcium-dependent phospholipid scramblase activity; scrambles phosphatidylserine, phosphatidylcholine and galactosylceramide. Does not exhibit calcium-activated chloride channel (CaCC) activity. Can inhibit the activity of ANO1. This is Anoctamin-9 from Mus musculus (Mouse).